We begin with the raw amino-acid sequence, 390 residues long: Neuromedin-B receptor (390 aa).

At 1–44 (MPPKSLSNLSQTAGVNQSGFFPGASERDFLPATDRTTAEFVIRC) the chain is on the extracellular side. N-linked (GlcNAc...) asparagine glycans are attached at residues asparagine 8 and asparagine 16. A helical transmembrane segment spans residues 45–65 (VIPSLYLLIITVGLLGNIVLV). Residues 66–76 (KIFLTNSAMRS) are Cytoplasmic-facing. The chain crosses the membrane as a helical span at residues 77 to 97 (VPNIFISNLAAGDVLLLLTCV). The Extracellular portion of the chain corresponds to 98 to 117 (PVDASRYFLDEWMFGKVGCK). Cysteine 116 and cysteine 198 form a disulfide bridge. Residues 118-138 (LIPVIQLTSVGVSVFTLTALS) form a helical membrane-spanning segment. Topologically, residues 139-155 (ADRYRAIVNPMDIQTSG) are cytoplasmic. Residues 156 to 176 (AVLWTCVKAGGIWVVSVLLAV) form a helical membrane-spanning segment. The Extracellular segment spans residues 177–210 (PEAVFSEVARIDGLDNGSFTACIPYPQTDELHPK). N-linked (GlcNAc...) asparagine glycosylation is present at asparagine 192. The helical transmembrane segment at 211–231 (IHSVLIFLVYFLIPLGIISVY) threads the bilayer. At 232–266 (YYHIAKTLIKSAHNLPGEYNEHTKKQMETRKRLAK) the chain is on the cytoplasmic side. A helical transmembrane segment spans residues 267–287 (IVLVFVGCFVFCWFPNHILYM). Residues 288-305 (YRSFNYNEIDPSLGHMIV) are Extracellular-facing. A helical transmembrane segment spans residues 306-328 (TLVARVLSFCNSCVNPFALYLLS). Over 329–390 (ESFRKHFNNQ…GHSVKQEMAL (62 aa)) the chain is Cytoplasmic. Residue cysteine 341 is the site of S-palmitoyl cysteine attachment. Phosphoserine is present on serine 352.

It belongs to the G-protein coupled receptor 1 family. Highly expressed in peripheral tissues where it is detected in the respiratory system, circulatory system, digestive system, urogenital system, lymphatic organs and endocrine system (at protein level). In the testis, expressed mainly in Leydig cells (at protein level).

The protein resides in the cell membrane. Receptor for neuromedin-B. Contributes to the maintenance of basal sigh rate through signaling in the pre-Botzinger complex, a cluster of several thousand neurons in the ventrolateral medulla responsible for inspiration during respiratory activity. Contributes to the induction of sneezing following exposure to chemical irritants or allergens which causes release of NMB by nasal sensory neurons and activation of NMBR-expressing neurons in the sneeze-evoking region of the brainstem. These in turn activate neurons of the caudal ventral respiratory group, giving rise to the sneezing response. Contributes to induction of acute itch, possibly through its activation on dorsal root ganglion neurons by the NMB peptide. Plays a role in the innate immune response to influenza A virus infection by enhancing interferon alpha expression and reducing expression of IL6. Plays a role in CSF1-induced proliferation of osteoclast precursors by contributing to the positive regulation of the expression of the CSF1 receptor CSF1R. The protein is Neuromedin-B receptor (NMBR) of Sus scrofa (Pig).